Consider the following 198-residue polypeptide: Large ribosomal subunit protein eL18 (198 aa).

The interval 157–198 (RHFGASGVPGSHSKPYATNRGKETKRGRRTGRSYKRKAFRHV) is disordered. The segment covering 179-198 (ETKRGRRTGRSYKRKAFRHV) has biased composition (basic residues).

It belongs to the eukaryotic ribosomal protein eL18 family.

Its subcellular location is the cytoplasm. The chain is Large ribosomal subunit protein eL18 (RPL18-A) from Leishmania major.